The primary structure comprises 154 residues: Aspartate carbamoyltransferase regulatory chain (154 aa).

The Zn(2+) site is built by C109, C114, C138, and C141.

The protein belongs to the PyrI family. Contains catalytic and regulatory chains. The cofactor is Zn(2+).

In terms of biological role, involved in allosteric regulation of aspartate carbamoyltransferase. The sequence is that of Aspartate carbamoyltransferase regulatory chain from Pectobacterium carotovorum subsp. carotovorum (strain PC1).